The primary structure comprises 100 residues: NADH-quinone oxidoreductase subunit K (100 aa).

Transmembrane regions (helical) follow at residues 4–24 (LQHG…GLVI), 28–48 (LLFM…AFVV), and 60–80 (IMYI…LALL).

It belongs to the complex I subunit 4L family. As to quaternary structure, NDH-1 is composed of 13 different subunits. Subunits NuoA, H, J, K, L, M, N constitute the membrane sector of the complex.

It is found in the cell inner membrane. It catalyses the reaction a quinone + NADH + 5 H(+)(in) = a quinol + NAD(+) + 4 H(+)(out). In terms of biological role, NDH-1 shuttles electrons from NADH, via FMN and iron-sulfur (Fe-S) centers, to quinones in the respiratory chain. The immediate electron acceptor for the enzyme in this species is believed to be ubiquinone. Couples the redox reaction to proton translocation (for every two electrons transferred, four hydrogen ions are translocated across the cytoplasmic membrane), and thus conserves the redox energy in a proton gradient. This Cronobacter sakazakii (strain ATCC BAA-894) (Enterobacter sakazakii) protein is NADH-quinone oxidoreductase subunit K.